A 298-amino-acid polypeptide reads, in one-letter code: GTPase Era (298 aa).

One can recognise an Era-type G domain in the interval 3–170 (KSGFVAILGR…VQLLKDNLEE (168 aa)). Positions 11–18 (GRPNVGKS) are G1. 11–18 (GRPNVGKS) provides a ligand contact to GTP. The segment at 37–41 (QTTRN) is G2. Residues 58–61 (DTPG) form a G3 region. GTP-binding positions include 58–62 (DTPGI) and 120–123 (NKID). The G4 stretch occupies residues 120 to 123 (NKID). The segment at 149-151 (ISA) is G5. In terms of domain architecture, KH type-2 spans 201–279 (TQQEVPHSVA…YLETWVKVKK (79 aa)).

Belongs to the TRAFAC class TrmE-Era-EngA-EngB-Septin-like GTPase superfamily. Era GTPase family. As to quaternary structure, monomer.

Its subcellular location is the cytoplasm. The protein resides in the cell membrane. In terms of biological role, an essential GTPase that binds both GDP and GTP, with rapid nucleotide exchange. Plays a role in 16S rRNA processing and 30S ribosomal subunit biogenesis and possibly also in cell cycle regulation and energy metabolism. The sequence is that of GTPase Era from Streptococcus equi subsp. equi (strain 4047).